Here is a 325-residue protein sequence, read N- to C-terminus: Putative gluconeogenesis factor (325 aa).

The protein belongs to the gluconeogenesis factor family.

It is found in the cytoplasm. Its function is as follows. Required for morphogenesis under gluconeogenic growth conditions. In Streptococcus pneumoniae serotype 4 (strain ATCC BAA-334 / TIGR4), this protein is Putative gluconeogenesis factor.